Here is a 106-residue protein sequence, read N- to C-terminus: Large ribosomal subunit protein bL21 (106 aa).

The protein belongs to the bacterial ribosomal protein bL21 family. Part of the 50S ribosomal subunit. Contacts protein L20.

In terms of biological role, this protein binds to 23S rRNA in the presence of protein L20. This Chlamydia abortus (strain DSM 27085 / S26/3) (Chlamydophila abortus) protein is Large ribosomal subunit protein bL21.